The primary structure comprises 501 residues: Large ribosomal subunit protein uL2m (501 aa).

Disordered regions lie at residues 187–217 (GRER…APRR) and 459–501 (AMNP…KRRN). Over residues 198 to 213 (NTFSQSEGQRWKTQSG) the composition is skewed to polar residues. The span at 464–474 (DHPHGGGEGRT) shows a compositional bias: basic and acidic residues.

It belongs to the universal ribosomal protein uL2 family.

The protein resides in the mitochondrion. The sequence is that of Large ribosomal subunit protein uL2m (RPL2) from Marchantia polymorpha (Common liverwort).